A 159-amino-acid polypeptide reads, in one-letter code: Large ribosomal subunit protein bL17 (159 aa).

Residues 124 to 135 (EANRATRAAASK) are compositionally biased toward low complexity. The interval 124-159 (EANRATRAAASKQAEEAKAEEAEATEAEAEETTEEK) is disordered. A compositionally biased stretch (acidic residues) spans 145–159 (AEATEAEAEETTEEK).

This sequence belongs to the bacterial ribosomal protein bL17 family. In terms of assembly, part of the 50S ribosomal subunit. Contacts protein L32.

The sequence is that of Large ribosomal subunit protein bL17 from Corynebacterium aurimucosum (strain ATCC 700975 / DSM 44827 / CIP 107346 / CN-1) (Corynebacterium nigricans).